The following is a 91-amino-acid chain: MATSGRLLCVCLVLGLVFGSLGYPVMEKKRAGKNFDLGTIANWAWQIGEKGGEIIDAIGTSNVPCGDGTCQFGCCEDDRCEDLGCDTFSSS.

A signal peptide spans 1-21 (MATSGRLLCVCLVLGLVFGSL). The propeptide occupies 22–50 (GYPVMEKKRAGKNFDLGTIANWAWQIGEK).

Belongs to the teretoxin M (TM) superfamily. Contains 3 disulfide bonds. Expressed by the venom duct.

The protein localises to the secreted. In Terebra anilis (Auger snail), this protein is Teretoxin Tan6.2.